The following is a 280-amino-acid chain: Maltodextrin transport system permease protein MalD (280 aa).

6 helical membrane passes run L15–I35, L77–A97, L110–V130, W142–G162, V200–L220, and I244–F264. Residues Y73–L265 form the ABC transmembrane type-1 domain.

This sequence belongs to the binding-protein-dependent transport system permease family. MalFG subfamily.

It is found in the cell membrane. Functionally, part of the binding-protein-dependent transport system for maltodextrin; probably responsible for the translocation of the substrate across the membrane. This Streptococcus pneumoniae (strain ATCC BAA-255 / R6) protein is Maltodextrin transport system permease protein MalD (malD).